The chain runs to 353 residues: Peptide chain release factor 1 (353 aa).

Glutamine 230 bears the N5-methylglutamine mark.

It belongs to the prokaryotic/mitochondrial release factor family. Methylated by PrmC. Methylation increases the termination efficiency of RF1.

It is found in the cytoplasm. Peptide chain release factor 1 directs the termination of translation in response to the peptide chain termination codons UAG and UAA. This chain is Peptide chain release factor 1, found in Gluconobacter oxydans (strain 621H) (Gluconobacter suboxydans).